A 131-amino-acid chain; its full sequence is Holo-[acyl-carrier-protein] synthase (131 aa).

Residues aspartate 8 and glutamate 57 each coordinate Mg(2+).

The protein belongs to the P-Pant transferase superfamily. AcpS family. The cofactor is Mg(2+).

It is found in the cytoplasm. The enzyme catalyses apo-[ACP] + CoA = holo-[ACP] + adenosine 3',5'-bisphosphate + H(+). Its function is as follows. Transfers the 4'-phosphopantetheine moiety from coenzyme A to a Ser of acyl-carrier-protein. The chain is Holo-[acyl-carrier-protein] synthase from Thiobacillus denitrificans (strain ATCC 25259 / T1).